A 286-amino-acid polypeptide reads, in one-letter code: MVAVIIKGNEVAEKKRAQLKEKVVKLKEQGIVPGLAVILVGEDPASRSYVKGKEKGCEQVGIYSELIELPETITEERLLVEIDRLNGDDRINGILVQLPLPKHIEEKAIIERISPEKDVDGFHPISVGRMMTGQDTFLPCTPHGILELVKETNLDISGKHVVVIGRSNIVGKPVGQLFLNENATVTYCHSKTRNIKELSKLADILIVAVGRPKMVTADYIKEGAVVIDVGVNRLETGKLCGDVDFDNVLDVAGYITPVPKGVGPMTITMLLHNTVESAKRAGVVCQ.

Residues 165 to 167 (GRS), S190, and V231 each bind NADP(+).

This sequence belongs to the tetrahydrofolate dehydrogenase/cyclohydrolase family. As to quaternary structure, homodimer.

The enzyme catalyses (6R)-5,10-methylene-5,6,7,8-tetrahydrofolate + NADP(+) = (6R)-5,10-methenyltetrahydrofolate + NADPH. It carries out the reaction (6R)-5,10-methenyltetrahydrofolate + H2O = (6R)-10-formyltetrahydrofolate + H(+). The protein operates within one-carbon metabolism; tetrahydrofolate interconversion. In terms of biological role, catalyzes the oxidation of 5,10-methylenetetrahydrofolate to 5,10-methenyltetrahydrofolate and then the hydrolysis of 5,10-methenyltetrahydrofolate to 10-formyltetrahydrofolate. The protein is Bifunctional protein FolD of Bacillus mycoides (strain KBAB4) (Bacillus weihenstephanensis).